The chain runs to 363 residues: Chorismate synthase (363 aa).

NADP(+) contacts are provided by Arg48 and Arg54. Residues 125–127 (RSS), 237–238 (NA), Gly277, 292–296 (KPTSS), and Arg318 each bind FMN.

The protein belongs to the chorismate synthase family. Homotetramer. Requires FMNH2 as cofactor.

It carries out the reaction 5-O-(1-carboxyvinyl)-3-phosphoshikimate = chorismate + phosphate. It functions in the pathway metabolic intermediate biosynthesis; chorismate biosynthesis; chorismate from D-erythrose 4-phosphate and phosphoenolpyruvate: step 7/7. Its function is as follows. Catalyzes the anti-1,4-elimination of the C-3 phosphate and the C-6 proR hydrogen from 5-enolpyruvylshikimate-3-phosphate (EPSP) to yield chorismate, which is the branch point compound that serves as the starting substrate for the three terminal pathways of aromatic amino acid biosynthesis. This reaction introduces a second double bond into the aromatic ring system. The sequence is that of Chorismate synthase from Pseudomonas putida (strain ATCC 700007 / DSM 6899 / JCM 31910 / BCRC 17059 / LMG 24140 / F1).